We begin with the raw amino-acid sequence, 383 residues long: tRNA-specific 2-thiouridylase MnmA (383 aa).

Residues 16 to 23 and Leu42 contribute to the ATP site; that span reads AMSGGVDS. Cys110 acts as the Nucleophile in catalysis. Residues Cys110 and Cys209 are joined by a disulfide bond. Residue Gly134 participates in ATP binding. Residues 159 to 161 form an interaction with tRNA region; the sequence is KDQ. Cys209 functions as the Cysteine persulfide intermediate in the catalytic mechanism.

This sequence belongs to the MnmA/TRMU family.

It is found in the cytoplasm. The enzyme catalyses S-sulfanyl-L-cysteinyl-[protein] + uridine(34) in tRNA + AH2 + ATP = 2-thiouridine(34) in tRNA + L-cysteinyl-[protein] + A + AMP + diphosphate + H(+). Functionally, catalyzes the 2-thiolation of uridine at the wobble position (U34) of tRNA, leading to the formation of s(2)U34. The polypeptide is tRNA-specific 2-thiouridylase MnmA (Caulobacter vibrioides (strain ATCC 19089 / CIP 103742 / CB 15) (Caulobacter crescentus)).